Consider the following 1219-residue polypeptide: Pheromone-regulated membrane protein 10 (1219 aa).

Positions 1–11 (MMRTQSDEHVA) are enriched in basic and acidic residues. 4 disordered regions span residues 1-273 (MMRT…IERE), 303-490 (LASF…DPFT), 503-533 (HDDD…EDYV), and 555-713 (EGNK…RPVK). The span at 42–53 (DENDDGHDDSDE) shows a compositional bias: acidic residues. The segment covering 57–68 (SVVIPTPSVVIV) has biased composition (low complexity). Over residues 104–115 (LKSPGTPTTYSP) the composition is skewed to polar residues. Over residues 136–155 (GSSLSSTTLMNTLLNSSGLG) the composition is skewed to low complexity. Composition is skewed to acidic residues over residues 159 to 171 (TESE…DEEV) and 219 to 231 (QEEE…DDDG). Basic and acidic residues-rich tracts occupy residues 259 to 273 (ADRA…IERE), 330 to 346 (DDQR…RREN), and 395 to 421 (LDRR…EKER). Residues 422–432 (QHHHHNHHHHH) show a composition bias toward basic residues. The segment covering 435–446 (ETGPNTGASSPF) has biased composition (polar residues). Over residues 448-470 (EEEKDREAEEAEILRDQARDLVN) the composition is skewed to basic and acidic residues. Positions 565 to 577 (TTVGDGTSTGDVS) are enriched in low complexity. Over residues 598-615 (KSKTKTTQKLGLKKKKKE) the composition is skewed to basic residues. Basic and acidic residues predominate over residues 616 to 641 (LLKIIEDQRKEKEENKKRPKWYDKSR). Low complexity predominate over residues 642–652 (STSPSPGGTPA). Residues 653–673 (PHHHHHIPGLHLHHHTKGHQR) show a composition bias toward basic residues. Residues 693–713 (GGDKPPDRPRSLRSEALRPVK) are compositionally biased toward basic and acidic residues. The next 10 membrane-spanning stretches (helical) occupy residues 864–884 (PPWL…PYAF), 888–908 (WADI…QIIV), 918–938 (VFEV…GTIS), 945–965 (FCFA…YIVL), 983–1003 (MFYA…GAVV), 1021–1041 (LDPL…ALVN), 1049–1069 (PSML…GANI), 1075–1095 (SSYL…NLYS), 1100–1120 (GLAF…GVAS), and 1184–1204 (LGFT…AATL).

This sequence belongs to the ThrE exporter (TC 2.A.79) family.

The protein localises to the membrane. The protein is Pheromone-regulated membrane protein 10 of Yarrowia lipolytica (strain CLIB 122 / E 150) (Yeast).